The sequence spans 152 residues: Sec-independent protein translocase protein TatB (152 aa).

A helical transmembrane segment spans residues 1–21; the sequence is MFDVAPSELLLVAVVALVVIG. A compositionally biased stretch (basic and acidic residues) spans 60–71; that stretch reads EDMEKRWAEENA. Residues 60–152 form a disordered region; sequence EDMEKRWAEE…KEADQQEKQS (93 aa). Composition is skewed to low complexity over residues 84 to 98 and 124 to 140; these read TASTSSPATPSPVSD and AANHTETTATTAASTPA. Positions 141–152 are enriched in basic and acidic residues; the sequence is KPKEADQQEKQS.

It belongs to the TatB family. In terms of assembly, the Tat system comprises two distinct complexes: a TatABC complex, containing multiple copies of TatA, TatB and TatC subunits, and a separate TatA complex, containing only TatA subunits. Substrates initially bind to the TatABC complex, which probably triggers association of the separate TatA complex to form the active translocon.

It is found in the cell inner membrane. Functionally, part of the twin-arginine translocation (Tat) system that transports large folded proteins containing a characteristic twin-arginine motif in their signal peptide across membranes. Together with TatC, TatB is part of a receptor directly interacting with Tat signal peptides. TatB may form an oligomeric binding site that transiently accommodates folded Tat precursor proteins before their translocation. In Zymomonas mobilis subsp. mobilis (strain ATCC 31821 / ZM4 / CP4), this protein is Sec-independent protein translocase protein TatB.